The sequence spans 391 residues: Zinc finger protein DPF3 (391 aa).

The span at 152-165 (ENGDGFHDDEDFEV) shows a compositional bias: acidic residues. Disordered regions lie at residues 152-200 (ENGD…PYVC) and 236-266 (LAEE…QKAP). Basic residues predominate over residues 169 to 183 (KRKHRNKGRGRGSGR). The C2H2-type zinc finger occupies 198 to 235 (YVCDNRYKQKHNSKTADSVCGKRYKNRPGLSYHYAHTH). PHD-type zinc fingers lie at residues 273-333 (NDYC…CKSC) and 330-380 (CKSC…CQNL).

As to quaternary structure, component of the BAF complex. Interacts with acetylated histones H3 and H4. Component of neuron-specific chromatin remodeling complex (nBAF complex), a subfamily of ATP-dependent SWI/SNF chromatin remodeling complexes. In terms of tissue distribution, expressed in the heart and somites.

The protein resides in the nucleus. Functionally, muscle-specific component of the BAF complex, a multiprotein complex involved in transcriptional activation and repression of select genes by chromatin remodeling (alteration of DNA-nucleosome topology). Specifically binds acetylated lysines on histone 3 and 4. In the complex, it acts as a tissue-specific anchor between histone acetylations and methylations and chromatin remodeling. Belongs to the neuron-specific chromatin remodeling complex (nBAF complex) and may play a role in neural development. Plays an essential role in heart and skeletal muscle development. The polypeptide is Zinc finger protein DPF3 (dpf3) (Danio rerio (Zebrafish)).